The primary structure comprises 73 residues: Toxin Td5 (73 aa).

Positions Ile-1 to Cys-7 are cleaved as a signal peptide. Residues Lys-8–Arg-70 form the LCN-type CS-alpha/beta domain. Cystine bridges form between Cys-18/Cys-69, Cys-22/Cys-44, Cys-30/Cys-50, and Cys-34/Cys-52. Arg-70 is subject to Arginine amide.

It belongs to the long (4 C-C) scorpion toxin superfamily. Sodium channel inhibitor family. Beta subfamily. Expressed by the venom gland.

It is found in the secreted. Its function is as follows. Beta toxins bind voltage-independently at site-4 of sodium channels (Nav) and shift the voltage of activation toward more negative potentials thereby affecting sodium channel activation and promoting spontaneous and repetitive firing. The polypeptide is Toxin Td5 (Tityus discrepans (Venezuelan scorpion)).